The sequence spans 315 residues: Tryptophan prenyltransferase ComQ (315 aa).

Mg(2+) contacts are provided by Asp95 and Asp99.

The protein belongs to the FPP/GGPP synthase family. Mg(2+) is required as a cofactor.

The protein localises to the cell membrane. The catalysed reaction is L-tryptophyl-[protein] + (2E,6E)-farnesyl diphosphate = (2S,3R)-3-farnesyl-2,3-dihydro-2,N(alpha)-cyclo-L-tryptophyl-[protein] + diphosphate. Its function is as follows. Part of a major quorum-sensing system that regulates the development of genetic competence. Involved in the maturation of the competence pheromone ComX. Acts by catalyzing the transfer of a farnesyl group on the ComX pheromone. In vitro, can also catalyze the farnesylation of single tryptophan and tryptophan derivatives. This is Tryptophan prenyltransferase ComQ from Bacillus subtilis subsp. natto (strain BEST195).